A 479-amino-acid polypeptide reads, in one-letter code: Ribosomal RNA small subunit methyltransferase F (479 aa).

Residues 125–131 (AAAPGSK), Glu149, Asp176, and Asp194 each bind S-adenosyl-L-methionine. Cys247 serves as the catalytic Nucleophile.

The protein belongs to the class I-like SAM-binding methyltransferase superfamily. RsmB/NOP family.

It is found in the cytoplasm. The catalysed reaction is cytidine(1407) in 16S rRNA + S-adenosyl-L-methionine = 5-methylcytidine(1407) in 16S rRNA + S-adenosyl-L-homocysteine + H(+). Functionally, specifically methylates the cytosine at position 1407 (m5C1407) of 16S rRNA. The polypeptide is Ribosomal RNA small subunit methyltransferase F (Salmonella newport (strain SL254)).